Here is a 509-residue protein sequence, read N- to C-terminus: ATP synthase subunit beta (509 aa).

167-174 contacts ATP; sequence GGAGVGKT. The interval 476 to 509 is disordered; it reads ESLGAKMEDTSGDGAPAQSDSKSDSKGDDADKDA. Residues 496 to 509 show a composition bias toward basic and acidic residues; it reads SKSDSKGDDADKDA.

It belongs to the ATPase alpha/beta chains family. As to quaternary structure, F-type ATPases have 2 components, CF(1) - the catalytic core - and CF(0) - the membrane proton channel. CF(1) has five subunits: alpha(3), beta(3), gamma(1), delta(1), epsilon(1). CF(0) has three main subunits: a(1), b(2) and c(9-12). The alpha and beta chains form an alternating ring which encloses part of the gamma chain. CF(1) is attached to CF(0) by a central stalk formed by the gamma and epsilon chains, while a peripheral stalk is formed by the delta and b chains.

The protein resides in the cell membrane. The enzyme catalyses ATP + H2O + 4 H(+)(in) = ADP + phosphate + 5 H(+)(out). Functionally, produces ATP from ADP in the presence of a proton gradient across the membrane. The catalytic sites are hosted primarily by the beta subunits. This is ATP synthase subunit beta from Mycobacterium sp. (strain KMS).